A 1082-amino-acid chain; its full sequence is Inner tegument protein (1082 aa).

Residues 604-1082 (DHIDCLFNIS…QQDLIAPLTF (479 aa)) are interaction with large tegument protein.

This sequence belongs to the herpesviridae inner tegument protein family. Interacts (via C-terminus) with the large tegument protein/LTP (via N-terminus).

Its subcellular location is the virion tegument. The protein resides in the host cytoplasm. It localises to the host nucleus. It is found in the host Golgi apparatus. The protein localises to the host trans-Golgi network. Its function is as follows. Plays an essential role in cytoplasmic secondary envelopment during viral egress. Interacts with the capsid via the large tegument protein/LTP and participates in its transport to the host trans-Golgi network (TGN) where secondary envelopment occurs. Modulates tegumentation and capsid accumulation at the viral assembly complex. The sequence is that of Inner tegument protein (U30) from Homo sapiens (Human).